The sequence spans 747 residues: DNA ligase (747 aa).

NAD(+)-binding positions include 113-117 (DRAYD), 161-162 (SI), and Glu-190. Lys-192 functions as the N6-AMP-lysine intermediate in the catalytic mechanism. Positions 213, 249, 364, and 388 each coordinate NAD(+). Residues Cys-479, Cys-482, Cys-495, and Cys-501 each contribute to the Zn(2+) site. The 88-residue stretch at 660-747 (TTNAPLSDLT…EHDDTLTWPP (88 aa)) folds into the BRCT domain.

It belongs to the NAD-dependent DNA ligase family. LigA subfamily. It depends on Mg(2+) as a cofactor. The cofactor is Mn(2+).

It catalyses the reaction NAD(+) + (deoxyribonucleotide)n-3'-hydroxyl + 5'-phospho-(deoxyribonucleotide)m = (deoxyribonucleotide)n+m + AMP + beta-nicotinamide D-nucleotide.. Its function is as follows. DNA ligase that catalyzes the formation of phosphodiester linkages between 5'-phosphoryl and 3'-hydroxyl groups in double-stranded DNA using NAD as a coenzyme and as the energy source for the reaction. It is essential for DNA replication and repair of damaged DNA. This is DNA ligase from Haloquadratum walsbyi (strain DSM 16790 / HBSQ001).